We begin with the raw amino-acid sequence, 445 residues long: UDP-N-acetylmuramate--L-alanine ligase (445 aa).

Residue 113–119 coordinates ATP; sequence GSHGKTS.

The protein belongs to the MurCDEF family.

Its subcellular location is the cytoplasm. The enzyme catalyses UDP-N-acetyl-alpha-D-muramate + L-alanine + ATP = UDP-N-acetyl-alpha-D-muramoyl-L-alanine + ADP + phosphate + H(+). It participates in cell wall biogenesis; peptidoglycan biosynthesis. Cell wall formation. The protein is UDP-N-acetylmuramate--L-alanine ligase of Enterococcus faecalis (strain ATCC 700802 / V583).